Reading from the N-terminus, the 265-residue chain is Glutamate racemase (265 aa).

Residues 12–13 (DS) and 44–45 (YG) contribute to the substrate site. Cysteine 75 functions as the Proton donor/acceptor in the catalytic mechanism. 76–77 (NT) lines the substrate pocket. Cysteine 186 functions as the Proton donor/acceptor in the catalytic mechanism. A substrate-binding site is contributed by 187-188 (TH).

Belongs to the aspartate/glutamate racemases family.

It carries out the reaction L-glutamate = D-glutamate. The protein operates within cell wall biogenesis; peptidoglycan biosynthesis. Its function is as follows. Provides the (R)-glutamate required for cell wall biosynthesis. The sequence is that of Glutamate racemase from Pseudomonas putida (strain W619).